Here is a 608-residue protein sequence, read N- to C-terminus: Alpha-glycerophosphate oxidase (608 aa).

Position 21–49 (21–49 (DLLIIGGGITGAGVALQAAASGLETGLIE)) interacts with FAD. Residues 393–418 (SAVSKLESSTSEKHLDPSAVSRGSSL) form a disordered region.

Belongs to the FAD-dependent glycerol-3-phosphate dehydrogenase family. It depends on FAD as a cofactor.

The protein localises to the cell membrane. The catalysed reaction is sn-glycerol 3-phosphate + O2 = dihydroxyacetone phosphate + H2O2. It functions in the pathway membrane lipid metabolism; glycerophospholipid metabolism. The protein is Alpha-glycerophosphate oxidase (glpO) of Streptococcus pneumoniae serotype 4 (strain ATCC BAA-334 / TIGR4).